A 235-amino-acid polypeptide reads, in one-letter code: Uracil-DNA glycosylase (235 aa).

Asp71 acts as the Proton acceptor in catalysis.

Belongs to the uracil-DNA glycosylase (UDG) superfamily. UNG family.

It localises to the cytoplasm. The catalysed reaction is Hydrolyzes single-stranded DNA or mismatched double-stranded DNA and polynucleotides, releasing free uracil.. Its function is as follows. Excises uracil residues from the DNA which can arise as a result of misincorporation of dUMP residues by DNA polymerase or due to deamination of cytosine. This chain is Uracil-DNA glycosylase, found in Campylobacter hominis (strain ATCC BAA-381 / DSM 21671 / CCUG 45161 / LMG 19568 / NCTC 13146 / CH001A).